The primary structure comprises 113 residues: Prefoldin subunit beta (113 aa).

The protein belongs to the prefoldin subunit beta family. Heterohexamer of two alpha and four beta subunits.

It localises to the cytoplasm. In terms of biological role, molecular chaperone capable of stabilizing a range of proteins. Seems to fulfill an ATP-independent, HSP70-like function in archaeal de novo protein folding. This chain is Prefoldin subunit beta, found in Methanococcus maripaludis (strain C7 / ATCC BAA-1331).